A 281-amino-acid chain; its full sequence is Pantothenate synthetase (281 aa).

30 to 37 (MGYLHEGH) serves as a coordination point for ATP. His37 (proton donor) is an active-site residue. Gln61 serves as a coordination point for (R)-pantoate. Residue Gln61 coordinates beta-alanine. 147–150 (GEKD) is a binding site for ATP. Position 153 (Gln153) interacts with (R)-pantoate. Residues Ile176 and 184-187 (KSSR) contribute to the ATP site.

It belongs to the pantothenate synthetase family. As to quaternary structure, homodimer.

The protein localises to the cytoplasm. The enzyme catalyses (R)-pantoate + beta-alanine + ATP = (R)-pantothenate + AMP + diphosphate + H(+). The protein operates within cofactor biosynthesis; (R)-pantothenate biosynthesis; (R)-pantothenate from (R)-pantoate and beta-alanine: step 1/1. In terms of biological role, catalyzes the condensation of pantoate with beta-alanine in an ATP-dependent reaction via a pantoyl-adenylate intermediate. In Clostridium botulinum (strain Loch Maree / Type A3), this protein is Pantothenate synthetase.